Reading from the N-terminus, the 249-residue chain is 5-oxoprolinase subunit A (249 aa).

This sequence belongs to the LamB/PxpA family. Forms a complex composed of PxpA, PxpB and PxpC.

The catalysed reaction is 5-oxo-L-proline + ATP + 2 H2O = L-glutamate + ADP + phosphate + H(+). Functionally, catalyzes the cleavage of 5-oxoproline to form L-glutamate coupled to the hydrolysis of ATP to ADP and inorganic phosphate. The protein is 5-oxoprolinase subunit A of Limosilactobacillus fermentum (strain NBRC 3956 / LMG 18251) (Lactobacillus fermentum).